The sequence spans 310 residues: Aspartate carbamoyltransferase catalytic subunit (310 aa).

Residues Arg59 and Thr60 each contribute to the carbamoyl phosphate site. Lys87 is a binding site for L-aspartate. The carbamoyl phosphate site is built by Arg109, His137, and Gln140. 2 residues coordinate L-aspartate: Arg170 and Arg225. 2 residues coordinate carbamoyl phosphate: Gly266 and Pro267.

Belongs to the aspartate/ornithine carbamoyltransferase superfamily. ATCase family. As to quaternary structure, heterododecamer (2C3:3R2) of six catalytic PyrB chains organized as two trimers (C3), and six regulatory PyrI chains organized as three dimers (R2).

The enzyme catalyses carbamoyl phosphate + L-aspartate = N-carbamoyl-L-aspartate + phosphate + H(+). Its pathway is pyrimidine metabolism; UMP biosynthesis via de novo pathway; (S)-dihydroorotate from bicarbonate: step 2/3. Functionally, catalyzes the condensation of carbamoyl phosphate and aspartate to form carbamoyl aspartate and inorganic phosphate, the committed step in the de novo pyrimidine nucleotide biosynthesis pathway. The protein is Aspartate carbamoyltransferase catalytic subunit of Pelobacter propionicus (strain DSM 2379 / NBRC 103807 / OttBd1).